The chain runs to 293 residues: ATP synthase subunit a (293 aa).

8 consecutive transmembrane segments (helical) span residues Q39–I59, F73–G93, Y102–I122, S128–I148, T172–L192, I198–T218, L224–F244, and D245–A265.

The protein belongs to the ATPase A chain family. As to quaternary structure, F-type ATPases have 2 components, CF(1) - the catalytic core - and CF(0) - the membrane proton channel. CF(1) has five subunits: alpha(3), beta(3), gamma(1), delta(1), epsilon(1). CF(0) has three main subunits: a(1), b(2) and c(9-12). The alpha and beta chains form an alternating ring which encloses part of the gamma chain. CF(1) is attached to CF(0) by a central stalk formed by the gamma and epsilon chains, while a peripheral stalk is formed by the delta and b chains.

The protein resides in the cell membrane. Functionally, key component of the proton channel; it plays a direct role in the translocation of protons across the membrane. The polypeptide is ATP synthase subunit a (Mycoplasma pneumoniae (strain ATCC 29342 / M129 / Subtype 1) (Mycoplasmoides pneumoniae)).